The sequence spans 2115 residues: Non-reducing polyketide synthase ascC (2115 aa).

Residues 1 to 21 (MTLIQTKHSASAAVFSPQSTA) form a disordered region. The N-terminal acylcarrier protein transacylase domain (SAT) stretch occupies residues 14 to 260 (VFSPQSTAPK…HNSRNTELAQ (247 aa)). In terms of domain architecture, Ketosynthase family 3 (KS3) spans 381-805 (PDSIAIVGSA…GSNSALICSE (425 aa)). Catalysis depends on for beta-ketoacyl synthase activity residues Cys553, His689, and His728. The interval 908 to 1210 (LTFSGQSRTT…ANPSAHTFQA (303 aa)) is malonyl-CoA:ACP transacylase (MAT) domain. The active-site For acyl/malonyl transferase activity is Ser995. The N-terminal hotdog fold stretch occupies residues 1280 to 1406 (PKKVQQLVTL…GDFFATSGEM (127 aa)). One can recognise a PKS/mFAS DH domain in the interval 1280-1581 (PKKVQQLVTL…FMRIKAAKLE (302 aa)). The product template (PT) domain stretch occupies residues 1285-1580 (QLVTLKKTEG…QFMRIKAAKL (296 aa)). His1315 functions as the Proton acceptor; for dehydratase activity in the catalytic mechanism. Residues 1428 to 1581 (DAERLRTATA…FMRIKAAKLE (154 aa)) form a C-terminal hotdog fold region. Asp1492 acts as the Proton donor; for dehydratase activity in catalysis. Residues 1587-1624 (ANPGSKTKSTNGNALPSVPRSVPAGPTSAPQQVAPTTM) are disordered. Residues 1588-1600 (NPGSKTKSTNGNA) are compositionally biased toward polar residues. Positions 1640-1724 (PSKIADLKSL…PTAALTEGLV (85 aa)) constitute a Carrier domain. Ser1674 carries the post-translational modification O-(pantetheine 4'-phosphoryl)serine. The span at 1734 to 1748 (SDSIRNSTGFHTTIP) shows a compositional bias: polar residues. The tract at residues 1734–1767 (SDSIRNSTGFHTTIPATPAELHSNPPDSLDGSTV) is disordered. A thioesterase (TE) domain region spans residues 1777-2107 (ARFKLDTMVY…YDFLLGELEN (331 aa)). Active-site for thioesterase activity residues include Ser1897 and Asp2045.

It carries out the reaction 3 malonyl-CoA + acetyl-CoA + 2 H(+) = orsellinate + 3 CO2 + 4 CoA. The protein operates within secondary metabolite biosynthesis; terpenoid biosynthesis. Non-reducing polyketide synthase; part of the asc-1 gene cluster that mediates the biosynthesis of both ascochlorin and ascofuranone, a strong inhibitor of cyanide-insensitive alternative oxidases and a promising drug candidate against African trypanosomiasis. The first step in the pathway is performed by the non-reducing polyketide synthase ascC that produces orsellinic acid by condensing acetyl-CoA with 3 malonyl-CoA units. Orsellinic acid is then prenylated by the prenyltransferase ascA to yield ilicicolinic acid B. Ilicicolinic acid B is further reduced to ilicicolin B by the reductase ascB. The halogenase ascD then chlorinates ilicicolin B to produce ilicicolin A which is converted to ilicicolin A epoxide by the cytochrome P450 monooxygenase ascE that catalyzes stereoselective epoxidation of the terminal double bond of the prenyl group. Ilicicolin A epoxide is the last common precursor for the biosynthesis of ascofuranone and ascochlorin. The terpene cyclase ascF produces a monocyclic terpene, and the cyclization reaction is proposed to be initiated by protonation of the terminal epoxide of ilicicolin A epoxide to generate a monocyclic tertiarycation, which is followed by a series of hydride and methyl shifts with abstraction of proton, leading to the formation of the (14S,15R,19R)-trimethylcyclohexanone ring structure of ilicicolin C, which is finally reduced to ascochlorin by the dehydrogenase ascG. On the other hand, ilicicolin A epoxide is hydroxylated by the cytochrome P450 monooxygenase ascH, and the resultant product is cyclized by the terpene cyclase ascI to ascofuranol via protonation-initiated epoxide ring opening, which facilitates the 6-endo-tet cyclization to form the tetrahy-drofuran ring. Finally, ascofuranol is oxidized into ascofuranone by ascJ. The protein is Non-reducing polyketide synthase ascC of Acremonium egyptiacum (Oospora egyptiaca).